Here is a 714-residue protein sequence, read N- to C-terminus: Stellatatriene synthase (714 aa).

The tract at residues 1–325 is stellata-2,6,19-trien synthase; the sequence is MEYKFSTVVD…RYNSSGSFSD (325 aa). Asp92 and Asp96 together coordinate Mg(2+). The short motif at 92 to 96 is the DDXXD motif 1 element; sequence DDVTD. Positions 276–284 match the NSE motif motif; the sequence is YLKIVEEYK. Residues 326–713 are geranylgeranyl diphosphate synthase; that stretch reads HQLELMKNGV…LRLIMELLKT (388 aa). Residues 332 to 356 are disordered; that stretch reads KNGVPKDPASGSTNGTSNGTSNGTS. Residues 341–356 show a composition bias toward low complexity; the sequence is SGSTNGTSNGTSNGTS. Isopentenyl diphosphate-binding residues include Lys434, Arg437, and His466. Positions 473 and 477 each coordinate Mg(2+). A DDXXD motif 2 motif is present at residues 473 to 477; the sequence is DDVED. Dimethylallyl diphosphate is bound at residue Arg482. Residue Arg483 participates in isopentenyl diphosphate binding. Dimethylallyl diphosphate contacts are provided by Lys560, Thr561, Gln596, Asn603, Lys613, and Lys623.

The protein in the N-terminal section; belongs to the terpene synthase family. It in the C-terminal section; belongs to the FPP/GGPP synthase family. Hexamer.

It carries out the reaction 4 isopentenyl diphosphate + dimethylallyl diphosphate = (2E,6E,10E,14E)-geranylfarnesyl diphosphate + 4 diphosphate. It catalyses the reaction (2E,6E,10E,14E)-geranylfarnesyl diphosphate = stellata-2,6,19-triene + diphosphate. Its pathway is secondary metabolite biosynthesis; terpenoid biosynthesis. In terms of biological role, multifunctional diterpene synthase; part of the gene cluster that mediates the biosynthesis of the sesterterpene stellatic acid. The first step in the pathway is performed by the stellatatriene synthase that possesses both prenyl transferase and terpene cyclase activity, converting isopentenyl diphosphate and dimethylallyl diphosphate into geranylgeranyl diphosphate (GGDP) and then converting GGDP into stellata-2,6,19-triene. The cytochrome P450 monooxygenase Stl-P450 then catalyzes three successive oxidation reactions on the C-20 methyl group to generate the carboxylic acid of stellatic acid. In Emericella variicolor (Aspergillus stellatus), this protein is Stellatatriene synthase.